The following is a 143-amino-acid chain: Transcriptional regulator SlyA (143 aa).

Residues 2-135 (ESTLGSDLAR…LSGLIDKLER (134 aa)) form the HTH marR-type domain. The H-T-H motif DNA-binding region spans 49–72 (QIQLAKAIGIEQPSLVRTLDQLEE).

This sequence belongs to the SlyA family. In terms of assembly, homodimer.

In terms of biological role, transcription regulator that can specifically activate or repress expression of target genes. The protein is Transcriptional regulator SlyA of Yersinia enterocolitica serotype O:8 / biotype 1B (strain NCTC 13174 / 8081).